The sequence spans 291 residues: Probable L-ascorbate peroxidase 3, peroxisomal (291 aa).

The active-site Proton acceptor is the histidine 41. Positions tyrosine 114 to alanine 133 are disordered. The span at proline 116–alanine 133 shows a compositional bias: basic and acidic residues. Histidine 161 is a heme b binding site. Residues threonine 162, threonine 178, and aspartate 185 each coordinate K(+). A helical transmembrane segment spans residues leucine 263 to leucine 283.

The protein belongs to the peroxidase family. Ascorbate peroxidase subfamily. Heme b serves as cofactor. In terms of tissue distribution, expressed in stems.

The protein resides in the peroxisome membrane. The catalysed reaction is L-ascorbate + H2O2 = L-dehydroascorbate + 2 H2O. Its function is as follows. Plays a key role in hydrogen peroxide removal. This chain is Probable L-ascorbate peroxidase 3, peroxisomal, found in Oryza sativa subsp. japonica (Rice).